Reading from the N-terminus, the 101-residue chain is Alkene monooxygenase system, effector subunit (101 aa).

Belongs to the TmoD/XamoD family. In terms of assembly, monomer. The alkene monooxygenase multicomponent enzyme system is composed of an electron transfer component and a monooxygenase component interacting with the effector protein XamoD. The electron transfer component is composed of a ferredoxin reductase (XamoF) and a ferredoxin (XamoC), and the monooxygenase component is formed by a heterohexamer (dimer of heterotrimers) of two alpha subunits (XamoA), two beta subunits (XamoE) and two gamma subunits (XamoB).

Its subcellular location is the cytoplasm. Its function is as follows. Effector component of the alkene monooxygenase multicomponent enzyme system which catalyzes the O2- and NADH-dependent epoxidation of short chain (C2 to C6) alkenes to their corresponding epoxides. One possible role of this small protein might be to facilitate electron transfer between the reductase and ferredoxin components. The polypeptide is Alkene monooxygenase system, effector subunit (Xanthobacter autotrophicus (strain ATCC BAA-1158 / Py2)).